We begin with the raw amino-acid sequence, 485 residues long: Glutamyl-tRNA(Gln) amidotransferase subunit A (485 aa).

Residues Lys-79 and Ser-154 each act as charge relay system in the active site. Ser-178 acts as the Acyl-ester intermediate in catalysis.

Belongs to the amidase family. GatA subfamily. In terms of assembly, heterotrimer of A, B and C subunits.

It catalyses the reaction L-glutamyl-tRNA(Gln) + L-glutamine + ATP + H2O = L-glutaminyl-tRNA(Gln) + L-glutamate + ADP + phosphate + H(+). Allows the formation of correctly charged Gln-tRNA(Gln) through the transamidation of misacylated Glu-tRNA(Gln) in organisms which lack glutaminyl-tRNA synthetase. The reaction takes place in the presence of glutamine and ATP through an activated gamma-phospho-Glu-tRNA(Gln). The protein is Glutamyl-tRNA(Gln) amidotransferase subunit A of Staphylococcus saprophyticus subsp. saprophyticus (strain ATCC 15305 / DSM 20229 / NCIMB 8711 / NCTC 7292 / S-41).